The sequence spans 281 residues: Urease accessory protein UreD (281 aa).

Belongs to the UreD family. In terms of assembly, ureD, UreF and UreG form a complex that acts as a GTP-hydrolysis-dependent molecular chaperone, activating the urease apoprotein by helping to assemble the nickel containing metallocenter of UreC. The UreE protein probably delivers the nickel.

It localises to the cytoplasm. In terms of biological role, required for maturation of urease via the functional incorporation of the urease nickel metallocenter. This chain is Urease accessory protein UreD, found in Pseudomonas savastanoi pv. phaseolicola (strain 1448A / Race 6) (Pseudomonas syringae pv. phaseolicola (strain 1448A / Race 6)).